The following is a 220-amino-acid chain: Ribosomal RNA small subunit methyltransferase G (220 aa).

Residues Gly-82, Leu-87, 105–107 (DST), 133–134 (VE), and Arg-147 contribute to the S-adenosyl-L-methionine site.

Belongs to the methyltransferase superfamily. RNA methyltransferase RsmG family.

The protein localises to the cytoplasm. In terms of biological role, specifically methylates the N7 position of a guanine in 16S rRNA. In Chlorobium limicola (strain DSM 245 / NBRC 103803 / 6330), this protein is Ribosomal RNA small subunit methyltransferase G.